We begin with the raw amino-acid sequence, 419 residues long: Septin-2 (419 aa).

In terms of domain architecture, Septin-type G spans 40–306 (NGFVFNVMCI…ELYRQKRLEQ (267 aa)). Positions 50–57 (GETGLGKS) are G1 motif. Residues 50–57 (GETGLGKS), Ser79, Gly105, 186–194 (KADTISKVE), Gly240, and Arg255 each bind GTP. The segment at 102–105 (DTVG) is G3 motif. The interval 185–188 (AKAD) is G4 motif. The tract at residues 259–269 (WGTVQVENETH) is important for dimerization.

This sequence belongs to the TRAFAC class TrmE-Era-EngA-EngB-Septin-like GTPase superfamily. Septin GTPase family. May assemble into a multicomponent structure.

It localises to the cytoplasm. The protein resides in the cytoskeleton. It is found in the spindle. In terms of biological role, involved in cytokinesis. This Drosophila melanogaster (Fruit fly) protein is Septin-2.